Consider the following 227-residue polypeptide: Iron-regulated surface determinant protein C (227 aa).

An N-terminal signal peptide occupies residues 1–28 (MKNILKVFNTMILALIIIIATFSNTANA). The NEAT domain occupies 29–150 (ADSGTLNYEV…KFNGPSDVAG (122 aa)). 4 residues coordinate heme: S47, I48, Y132, and Y136. Residues 149–191 (AGANAPGKDDKNSASGSDKGSDGATTGQSESNSSNKDKVENPQ) form a disordered region. A compositionally biased stretch (low complexity) spans 161 to 172 (SASGSDKGSDGA). Residues 173 to 182 (TTGQSESNSS) show a composition bias toward polar residues. The short motif at 189–193 (NPQTN) is the NPQTN sorting signal element. T192 carries the pentaglycyl murein peptidoglycan amidated threonine modification. Positions 193 to 227 (NAGTPAYIYAIPVASLALLIAITLFVRKKSKGNVE) are cleaved as a propeptide — removed by sortase B.

It belongs to the IsdC family. As to quaternary structure, monomer. Interacts with IsdA.

It localises to the secreted. Its subcellular location is the cell wall. Involved in heme (porphyrin) scavenging. Binds hemoglobin and almost exclusively free-base protoporphyrin IX. Probably has a role as the central conduit of the isd heme uptake system, i.e. mediates the transfer of the iron-containing nutrient from IsdABH to the membrane translocation system IsdDEF. Hemin-free IsdC (apo-IsdC) acquires hemin from hemin-containing IsdA (holo-IsdA) probably through the activated holo-IsdA-apo-IsdC complex and due to the higher affinity of apo-IsdC for the cofactor. The reaction is reversible. The sequence is that of Iron-regulated surface determinant protein C (isdC) from Staphylococcus aureus (strain MRSA252).